The sequence spans 475 residues: Glutamyl-tRNA(Gln) amidotransferase subunit A (475 aa).

Residues Lys76 and Ser151 each act as charge relay system in the active site. The Acyl-ester intermediate role is filled by Ser175.

It belongs to the amidase family. GatA subfamily. As to quaternary structure, heterotrimer of A, B and C subunits.

It carries out the reaction L-glutamyl-tRNA(Gln) + L-glutamine + ATP + H2O = L-glutaminyl-tRNA(Gln) + L-glutamate + ADP + phosphate + H(+). Its function is as follows. Allows the formation of correctly charged Gln-tRNA(Gln) through the transamidation of misacylated Glu-tRNA(Gln) in organisms which lack glutaminyl-tRNA synthetase. The reaction takes place in the presence of glutamine and ATP through an activated gamma-phospho-Glu-tRNA(Gln). The chain is Glutamyl-tRNA(Gln) amidotransferase subunit A from Pelodictyon phaeoclathratiforme (strain DSM 5477 / BU-1).